The sequence spans 106 residues: Urease subunit beta (106 aa).

The protein belongs to the urease beta subunit family. Heterotrimer of UreA (gamma), UreB (beta) and UreC (alpha) subunits. Three heterotrimers associate to form the active enzyme.

It localises to the cytoplasm. It catalyses the reaction urea + 2 H2O + H(+) = hydrogencarbonate + 2 NH4(+). Its pathway is nitrogen metabolism; urea degradation; CO(2) and NH(3) from urea (urease route): step 1/1. The protein is Urease subunit beta of Prochlorococcus marinus (strain MIT 9301).